The primary structure comprises 423 residues: MTPAQRKFLKIVKDEHYFDKDSKILLALSGGKDSMTLFNWLYDLKEVLGIELGLAHINHGLREESKFEEIALREMATKLKVPIYVDKFTGEFTEKNARDFRYQFFEKLMIGENYNILLTAHHQGDLVETVLMRQITGRPLRSLQGIADRQPFAGGQLIRPLLKFTKEELDAQTYYEDSTNQGLDYFRNRIRNQLIPELKKENPQFSQSISDLSSEIKKALAVINQKISELEIVDEKISSKKFISQTKELQHFILQAFFAQYPEIEVSKKKFAELLHIINRPQQYFAKLNKEFYFVKTKDFFYLEKIQLERENSVEIVSENPQDESFMEVYLPLEGEIEIRKRQPGDQILINGHHKKLRKFFIDNKVPLKARENPLIFVDKKLYAIVGLACSDLSKMLKNDKIRRILWVKPSIGEEINDARKKS.

29–34 (SGGKDS) is an ATP binding site.

Belongs to the tRNA(Ile)-lysidine synthase family.

Its subcellular location is the cytoplasm. It carries out the reaction cytidine(34) in tRNA(Ile2) + L-lysine + ATP = lysidine(34) in tRNA(Ile2) + AMP + diphosphate + H(+). In terms of biological role, ligates lysine onto the cytidine present at position 34 of the AUA codon-specific tRNA(Ile) that contains the anticodon CAU, in an ATP-dependent manner. Cytidine is converted to lysidine, thus changing the amino acid specificity of the tRNA from methionine to isoleucine. This Lactococcus lactis subsp. lactis (strain IL1403) (Streptococcus lactis) protein is tRNA(Ile)-lysidine synthase.